A 625-amino-acid chain; its full sequence is Beta-galactosidase large subunit (625 aa).

Catalysis depends on E465, which acts as the Proton donor. The active-site Nucleophile is E533.

The protein belongs to the glycosyl hydrolase 2 family. Heterodimer of a large (LacL) and a small subunit (LacM).

The catalysed reaction is Hydrolysis of terminal non-reducing beta-D-galactose residues in beta-D-galactosides.. In terms of biological role, component of a beta-galactosidase. This is Beta-galactosidase large subunit from Latilactobacillus sakei (Lactobacillus sakei).